A 297-amino-acid polypeptide reads, in one-letter code: Vacuolar protein sorting-associated protein 26 (297 aa).

Belongs to the VPS26 family. As to quaternary structure, component of the retromer complex, composed of VPS26, VPS29 and VPS35. As part of the retromer complex, interacts with the sorting receptor SORTLR/sortilin. Interacts with GTPase RAB7.

In terms of biological role, plays a role in vesicular protein sorting. Component of the membrane-associated retromer complex which is essential in endosome-to-Golgi retrograde transport. The polypeptide is Vacuolar protein sorting-associated protein 26 (Plasmodium falciparum (isolate 3D7)).